A 580-amino-acid polypeptide reads, in one-letter code: MSDTWSSIQAHKKQLDSLRERLQRRRKQDSGHLDLRNPEAALSPTFRSDSPVPTAPTSSGPKPSTTSVAPELATDPELEKKLLHHLSDLALTLPTDAVSIRLAISTPDAPATQDGVESLLQKFAAQELIEVKRGLLQDDAHPTLVTYADHSKLSAMMGAVADKKGLGEVAGTIAGQKRRAEQDLTTVTTFASSLASGLASSASEPAKEPAKKSRKHAASDVDLEIESLLNQQSTKEQQSKKVSQEILELLNTTTAKEQSIVEKFRSRGRAQVQEFCDYGTKEECMKASDADRPCRKLHFRRIINKHTDESLGDCSFLNTCFHMDTCKYVHYEIDACVDSESPGSKEHMPSQELALTQSVGGDSSADRLFPPQWICCDIRYLDVSILGKFAVVMADPPWDIHMELPYGTLTDDEMRRLNIPVLQDDGFLFLWVTGRAMELGRECLNLWGYERVDEIIWVKTNQLQRIIRTGRTGHWLNHGKEHCLVGVKGNPQGFNQGLDCDVIVAEVRSTSHKPDEIYGMIERLSPGTRKIELFGRPHNVQPNWITLGNQLDGIHLLDPDVVARFKQRYPDGIISKPKNL.

A disordered region spans residues 1-70 (MSDTWSSIQA…PKPSTTSVAP (70 aa)). Residue S2 is modified to N-acetylserine; alternate. Phosphoserine; alternate is present on S2. Positions 28-37 (QDSGHLDLRN) are enriched in basic and acidic residues. Phosphoserine occurs at positions 43, 48, and 50. Low complexity predominate over residues 55–67 (APTSSGPKPSTTS). Glycyl lysine isopeptide (Lys-Gly) (interchain with G-Cter in SUMO1) cross-links involve residues K177, K211, K212, and K215. Residues 198–217 (LASSASEPAKEPAKKSRKHA) are disordered. The short motif at 210 to 215 (AKKSRK) is the Nuclear localization signal element. S219, S243, and S350 each carry phosphoserine. S-adenosyl-L-methionine-binding positions include 377–378 (DI) and D395. Positions 396–410 (PPWDIHMELPYGTLT) are gate loop 1. 2 interaction with METTL14 regions span residues 450–454 (ERVDE) and 464–480 (QRII…NHGK). The interphase loop stretch occupies residues 462–479 (QLQRIIRTGRTGHWLNHG). Residues 465-478 (RIIRTGRTGHWLNH) are positively charged region required for RNA-binding. The gate loop 2 stretch occupies residues 507 to 515 (VRSTSHKPD). S-adenosyl-L-methionine contacts are provided by residues K513, 536-539 (RPHN), and 549-550 (NQ).

This sequence belongs to the MT-A70-like family. As to quaternary structure, heterodimer; heterodimerizes with METTL14 to form an antiparallel heterodimer that constitutes an active methyltransferase. Component of the WMM complex, a N6-methyltransferase complex composed of a catalytic subcomplex, named MAC, and of an associated subcomplex, named MACOM. The MAC subcomplex is composed of METTL3 and METTL14. The MACOM subcomplex is composed of WTAP, ZC3H13, CBLL1/HAKAI, VIRMA, and, in some cases of RBM15 (RBM15 or RBM15B). Interacts with NCBP1/CBP80. Interacts with EIF4E. Interacts with EIF3B. Sumoylation inhibits the N6-adenosine-methyltransferase activity. Sumoylation does not affect subcellular location or interaction with METTL14. Desumoylated by SENP1. Present in both germ cells and somatic cells during testis development (at protein level).

It is found in the nucleus. The protein resides in the nucleus speckle. The protein localises to the cytoplasm. It carries out the reaction an adenosine in mRNA + S-adenosyl-L-methionine = an N(6)-methyladenosine in mRNA + S-adenosyl-L-homocysteine + H(+). With respect to regulation, methyltransferase activity is regulated by miRNAs via a sequence pairing mechanism. Methyltransferase activity is inhibited by sumoylation. The METTL3-METTL14 heterodimer forms a N6-methyltransferase complex that methylates adenosine residues at the N(6) position of some RNAs and regulates various processes such as the circadian clock, differentiation of embryonic and hematopoietic stem cells, cortical neurogenesis, response to DNA damage, differentiation of T-cells and primary miRNA processing. In the heterodimer formed with METTL14, METTL3 constitutes the catalytic core. N6-methyladenosine (m6A), which takes place at the 5'-[AG]GAC-3' consensus sites of some mRNAs, plays a role in mRNA stability, processing, translation efficiency and editing. M6A acts as a key regulator of mRNA stability: methylation is completed upon the release of mRNA into the nucleoplasm and promotes mRNA destabilization and degradation. In embryonic stem cells (ESCs), m6A methylation of mRNAs encoding key naive pluripotency-promoting transcripts results in transcript destabilization, promoting differentiation of ESCs. M6A regulates the length of the circadian clock: acts as an early pace-setter in the circadian loop by putting mRNA production on a fast-track for facilitating nuclear processing, thereby providing an early point of control in setting the dynamics of the feedback loop. M6A also regulates circadian regulation of hepatic lipid metabolism. M6A regulates spermatogonial differentiation and meiosis and is essential for male fertility and spermatogenesis. Also required for oogenesis. Involved in the response to DNA damage: in response to ultraviolet irradiation, METTL3 rapidly catalyzes the formation of m6A on poly(A) transcripts at DNA damage sites, leading to the recruitment of POLK to DNA damage sites. M6A is also required for T-cell homeostasis and differentiation: m6A methylation of transcripts of SOCS family members (SOCS1, SOCS3 and CISH) in naive T-cells promotes mRNA destabilization and degradation, promoting T-cell differentiation. Inhibits the type I interferon response by mediating m6A methylation of IFNB. M6A also regulates cortical neurogenesis: m6A methylation of transcripts related to transcription factors, neural stem cells, the cell cycle and neuronal differentiation during brain development promotes their destabilization and decay, promoting differentiation of radial glial cells. M6A also takes place in other RNA molecules, such as primary miRNA (pri-miRNAs). Mediates m6A methylation of Xist RNA, thereby participating in random X inactivation: m6A methylation of Xist leads to target YTHDC1 reader on Xist and promote transcription repression activity of Xist. METTL3 mediates methylation of pri-miRNAs, marking them for recognition and processing by DGCR8. Acts as a positive regulator of mRNA translation independently of the methyltransferase activity: promotes translation by interacting with the translation initiation machinery in the cytoplasm. The chain is N(6)-adenosine-methyltransferase catalytic subunit METTL3 from Mus musculus (Mouse).